A 458-amino-acid chain; its full sequence is GTPase Obg (458 aa).

Residues 1–157 (MSFLDRVKIY…ITLYLELKVL (157 aa)) enclose the Obg domain. The OBG-type G domain maps to 158 to 326 (ADLGLVGFPN…VLNEIVKVIS (169 aa)). Residues 164-171 (GFPNAGKS), 189-193 (FTTLN), 210-213 (DIPG), 280-283 (NKAD), and 307-309 (SAA) contribute to the GTP site. Residues Ser171 and Thr191 each contribute to the Mg(2+) site. The OCT domain maps to 341–419 (AVHGVEPLFK…VGQKEFEWSG (79 aa)). The disordered stretch occupies residues 420–458 (TELDSERAEQPDFEGYKRRTTQAERLEKRRQRRLKKEEK). The span at 423-446 (DSERAEQPDFEGYKRRTTQAERLE) shows a compositional bias: basic and acidic residues. Basic residues predominate over residues 447–458 (KRRQRRLKKEEK).

Belongs to the TRAFAC class OBG-HflX-like GTPase superfamily. OBG GTPase family. Monomer. Mg(2+) is required as a cofactor.

Its subcellular location is the cytoplasm. An essential GTPase which binds GTP, GDP and possibly (p)ppGpp with moderate affinity, with high nucleotide exchange rates and a fairly low GTP hydrolysis rate. Plays a role in control of the cell cycle, stress response, ribosome biogenesis and in those bacteria that undergo differentiation, in morphogenesis control. In Elusimicrobium minutum (strain Pei191), this protein is GTPase Obg.